Here is a 308-residue protein sequence, read N- to C-terminus: tRNA pseudouridine synthase B (308 aa).

D49 serves as the catalytic Nucleophile.

The protein belongs to the pseudouridine synthase TruB family. Type 1 subfamily.

It carries out the reaction uridine(55) in tRNA = pseudouridine(55) in tRNA. In terms of biological role, responsible for synthesis of pseudouridine from uracil-55 in the psi GC loop of transfer RNAs. This chain is tRNA pseudouridine synthase B, found in Nitrosococcus oceani (strain ATCC 19707 / BCRC 17464 / JCM 30415 / NCIMB 11848 / C-107).